A 383-amino-acid chain; its full sequence is Ceramide synthase 3 (383 aa).

The chain crosses the membrane as a helical span at residues 32–52 (VFVKPSHLYVTIPYAFLLLII). Positions 66–127 (KSFGIKETVR…RSRRNQERPS (62 aa)) are homeobox-like. Residues 130–331 (KKFQEACWRF…ILKMLNRCIF (202 aa)) enclose the TLC domain. A run of 5 helical transmembrane segments spans residues 139–159 (FAFY…KPWL), 174–194 (LLPS…SLLF), 205–225 (FLAH…SWCA), 264–284 (FFIF…FWIL), and 298–318 (FFSY…HLYW). The Cytoplasmic portion of the chain corresponds to 319-383 (GYYILKMLNR…HLIPNGQHGH (65 aa)). A Phosphoserine modification is found at Ser340. Residues 342 to 355 (DEDYEEEEEEEEEE) are compositionally biased toward acidic residues. Residues 342–363 (DEDYEEEEEEEEEEATKGKEMD) form a disordered region.

As to expression, expressed in the epidermis, where it localizes at the interface between the stratum granulosum and the stratum corneum (at protein level).

The protein resides in the endoplasmic reticulum membrane. The catalysed reaction is a very long-chain fatty acyl-CoA + a sphingoid base = an N-(very-long-chain fatty acyl)-sphingoid base + CoA + H(+). The enzyme catalyses docosanoyl-CoA + sphinganine = N-docosanoylsphinganine + CoA + H(+). It carries out the reaction tetracosanoyl-CoA + sphinganine = N-tetracosanoylsphinganine + CoA + H(+). It catalyses the reaction hexacosanoyl-CoA + sphinganine = N-hexacosanoylsphinganine + CoA + H(+). The catalysed reaction is 2-hydroxydocosanoyl-CoA + sphinganine = N-(2-hydroxydocosanoyl)-sphinganine + CoA + H(+). The enzyme catalyses 2-hydroxytetracosanoyl-CoA + sphinganine = N-(2-hydroxytetracosanoyl)-sphinganine + CoA + H(+). It carries out the reaction an ultra-long-chain fatty acyl-CoA + a sphingoid base = an N-(ultra-long-chain-acyl)-sphingoid base + CoA + H(+). It catalyses the reaction octacosanoyl-CoA + sphinganine = N-(octacosanoyl)-sphinganine + CoA + H(+). The catalysed reaction is a fatty acyl-CoA + sphing-4-enine = an N-acylsphing-4-enine + CoA + H(+). The enzyme catalyses sphinganine + octadecanoyl-CoA = N-(octadecanoyl)-sphinganine + CoA + H(+). It carries out the reaction 2-hydroxyoctadecanoyl-CoA + sphinganine = N-(2-hydroxyoctadecanoyl)-sphinganine + CoA + H(+). It functions in the pathway lipid metabolism; sphingolipid metabolism. Its function is as follows. Ceramide synthase that catalyzes the transfer of the acyl chain from acyl-CoA to a sphingoid base, with high selectivity toward very- and ultra-long-chain fatty acyl-CoA (chain length greater than C22). N-acylates sphinganine and sphingosine bases to form dihydroceramides and ceramides in de novo synthesis and salvage pathways, respectively. It is crucial for the synthesis of ultra-long-chain ceramides in the epidermis, to maintain epidermal lipid homeostasis and terminal differentiation. The protein is Ceramide synthase 3 of Homo sapiens (Human).